Reading from the N-terminus, the 712-residue chain is MLNSALLWKVWLRIDNSTDEVNQPIAVQFDEIDTVDDLKSRFFQKLSSTRWREINDNASIAIGLYAPKFDNQADNTSSNNTNDNSCRSKSNGAGSGANLSVNSNTKSSVSPTAGSFGLSKDLAKDRNVLQHPKPTQKRGALYDAFAAVPTVAATTNVDFPPNEAPMLSPQRPYSTSPKQFPATTKSPLLRFASVSPYPKFHSDNQIMASAGLTYVSPHNKNKYTRPLIRKGLNFTTESVNDCTYKIIFEPDELAINIYKELFGTMGSQPASQPLLIFSNVNLRQDVPPLDILNVVDYVPTNEEISQQKTQPTDHGAVGVFHLDDHISPGEQGLKQTIGDKADLKGKDGNSSPQEFKLITDEEQLRRASQELKDEEKDAESPWQAILLLPKGYKGGVDFRNKPVAHTDSSFNNEDTITHSELEVNTGSPSQESGSLNEAGIGITQPMSEVQRRKEDVTPASPILTSSQTPHYSNSLYNAPFAVSSPPDPLPNLFTTTSEKVFPKINVLIVEDNVINQAILGSFLRKHKISYKLAKNGQEAVNIWKEGGLHLIFMDLQLPVLSGIEAAKQIRDFEKQNGIGIQKSLNNSHSNLEKGTSKRFSQAPVIIVALTASNSQMDKRKALLSGCNDYLTKPVNLHWLSKKITEWGCMQALIDFDSWKQGESRMTDSVLVKSPQKPIAPSNPHSFKQATSMTPTHSPVRKNSNLSPTQIEL.

A disordered region spans residues 73-114 (ADNTSSNNTNDNSCRSKSNGAGSGANLSVNSNTKSSVSPTAG). Over residues 74 to 85 (DNTSSNNTNDNS) the composition is skewed to low complexity. Residues 87–113 (RSKSNGAGSGANLSVNSNTKSSVSPTA) show a composition bias toward polar residues. Phosphoserine is present on residues S110, S195, S327, S351, S368, and S380. The disordered stretch occupies residues 340 to 362 (KADLKGKDGNSSPQEFKLITDEE). Residues 448–468 (EVQRRKEDVTPASPILTSSQT) are disordered. In terms of domain architecture, Response regulatory spans 505 to 647 (NVLIVEDNVI…WLSKKITEWG (143 aa)). The residue at position 554 (D554) is a 4-aspartylphosphate. Residues 672 to 712 (KSPQKPIAPSNPHSFKQATSMTPTHSPVRKNSNLSPTQIEL) form a disordered region. S673 bears the Phosphoserine mark. A compositionally biased stretch (polar residues) spans 682–712 (NPHSFKQATSMTPTHSPVRKNSNLSPTQIEL). A Phosphothreonine modification is found at T693. Phosphoserine is present on residues S703 and S706.

Belongs to the SSK1 family. Interacts with SSK2, SSK22 and YPD1. The phosphorelay mechanism involves the sequential transfer of a phosphate group from 'His-576' (H1) to 'Asp-1144' (D1) of SLN1, then to 'His-64' (H2) of YPD1 and finally to Asp-554 (D2) of SSK1.

The protein localises to the cytoplasm. Functionally, final receptor of the SLN1-YPD1-SSK1 two-component regulatory system, which controls activity of the HOG1 pathway in response to changes in the osmolarity of the extracellular environment. Under normal osmotic conditions, maintained in a phosphorylated and inactive state by the phosphorelay intermediate protein YPD1. Under conditions of high osmolarity, the histidine kinase SLN1 is no longer active and the unphosphorylated form of SSK1 interacts with and activates SSK2 and SSK22, two MAPKKKs that further stimulate the PBS2-HOG1 MAPKK-MAPK cascade. Unphosphorylated SSK1 is subsequently degraded by the UBC7-dependent ubiquitin-proteasome system to down-regulate the HOG1 pathway after completion of the osmotic adaptation. This Saccharomyces cerevisiae (strain ATCC 204508 / S288c) (Baker's yeast) protein is Osmolarity two-component system protein SSK1.